A 175-amino-acid chain; its full sequence is Peptide deformylase (175 aa).

Residues cysteine 99 and histidine 141 each coordinate Fe cation. Residue glutamate 142 is part of the active site. Histidine 145 contacts Fe cation.

The protein belongs to the polypeptide deformylase family. Requires Fe(2+) as cofactor.

It catalyses the reaction N-terminal N-formyl-L-methionyl-[peptide] + H2O = N-terminal L-methionyl-[peptide] + formate. Its function is as follows. Removes the formyl group from the N-terminal Met of newly synthesized proteins. Requires at least a dipeptide for an efficient rate of reaction. N-terminal L-methionine is a prerequisite for activity but the enzyme has broad specificity at other positions. This is Peptide deformylase from Rickettsia typhi (strain ATCC VR-144 / Wilmington).